A 295-amino-acid polypeptide reads, in one-letter code: Probable palmitoyltransferase ZDHHC24 (295 aa).

At 1 to 20 (MTSFMSRVWCKVESTGRQLP) the chain is on the cytoplasmic side. The helical transmembrane segment at 21–41 (IVLNAVLVFSITAEVSYLVLV) threads the bilayer. At 42-60 (EAPFEPEQKKTDWSTIWTG) the chain is on the extracellular side. A helical membrane pass occupies residues 61-81 (LHLFAQYFMLGNITWNASLFV). Topologically, residues 82 to 151 (KTNPSIRGVF…HNYRYFLTCL (70 aa)) are cytoplasmic. Residues 102–152 (RYCYNCETHTPPRCSHCYDCNVCVLRRDHHCVFFGQCVGFHNYRYFLTCLL) enclose the DHHC domain. Cys-132 functions as the S-palmitoyl cysteine intermediate in the catalytic mechanism. The chain crosses the membrane as a helical span at residues 152 to 172 (LFMWAGLLYAVVMNAEVFIFI). Over 173–176 (LKEG) the chain is Extracellular. A helical membrane pass occupies residues 177–197 (VTFHSVMLLLVPWIMLVSGQV). The Cytoplasmic portion of the chain corresponds to 198 to 203 (TTRAFA). Residues 204–224 (FAFIADTCVVGFLLVAAFLFF) traverse the membrane as a helical segment. The Extracellular segment spans residues 225 to 295 (HVALMLRGQT…SLEPKKQAVH (71 aa)).

The protein belongs to the DHHC palmitoyltransferase family.

It localises to the membrane. The catalysed reaction is L-cysteinyl-[protein] + hexadecanoyl-CoA = S-hexadecanoyl-L-cysteinyl-[protein] + CoA. Probable palmitoyltransferase that could catalyze the addition of palmitate onto various protein substrates. This chain is Probable palmitoyltransferase ZDHHC24, found in Danio rerio (Zebrafish).